Here is a 182-residue protein sequence, read N- to C-terminus: CDP-diacylglycerol--glycerol-3-phosphate 3-phosphatidyltransferase (182 aa).

Over 1–12 (MRLNIPTCLTLF) the chain is Cytoplasmic. A helical transmembrane segment spans residues 13–37 (RLIIVPFFIIVFYLPFSNASFYSAI). Topologically, residues 38–60 (IFILAALTDWFDGFLARKLNQTT) are periplasmic. A helical transmembrane segment spans residues 61-81 (CFGAFLDPVADKIIVVIGLIL). Topologically, residues 82 to 86 (IIEYF) are cytoplasmic. Residues 87-107 (HSFWITIPSLIMIIREIIISS) traverse the membrane as a helical segment. Over 108–145 (LREWMAEIGKNNLLSVSLISKLKTSIQMLAIFSLLWKE) the chain is Periplasmic. Residues 146-168 (TYIIIIIGILSLYVSSILAFLSM) form a helical membrane-spanning segment. The Cytoplasmic portion of the chain corresponds to 169-181 (LKYFYIAWRDLFR).

It belongs to the CDP-alcohol phosphatidyltransferase class-I family.

It is found in the cell inner membrane. The catalysed reaction is a CDP-1,2-diacyl-sn-glycerol + sn-glycerol 3-phosphate = a 1,2-diacyl-sn-glycero-3-phospho-(1'-sn-glycero-3'-phosphate) + CMP + H(+). The protein operates within phospholipid metabolism; phosphatidylglycerol biosynthesis; phosphatidylglycerol from CDP-diacylglycerol: step 1/2. Functionally, catalyzes the conversion of cytidine diphosphate diacylglycerol (CDP-DG) and glycerol 3-phosphate into phosphatidylglycerol. Essential for the synthesis of anionic phospholipids, thereby playing a role in balancing the ratio of zwitterionic and anionic phospholipids, which is thought to be important for normal membrane function. The chain is CDP-diacylglycerol--glycerol-3-phosphate 3-phosphatidyltransferase from Wigglesworthia glossinidia brevipalpis.